The primary structure comprises 856 residues: Bifunctional uridylyltransferase/uridylyl-removing enzyme (856 aa).

The segment at 1 to 320 (MTLSAAPLQH…YCQVPRVTQH (320 aa)) is uridylyltransferase. Residues 321 to 678 (ISEYFHAVNG…ARLADDHEGL (358 aa)) are uridylyl-removing. The 123-residue stretch at 439-561 (VDEHILMVVR…VRTPRRLAAL (123 aa)) folds into the HD domain. ACT domains lie at 679–760 (QVLI…LPPQ) and 788–856 (ILSI…ALRI).

It belongs to the GlnD family. Requires Mg(2+) as cofactor.

It carries out the reaction [protein-PII]-L-tyrosine + UTP = [protein-PII]-uridylyl-L-tyrosine + diphosphate. The enzyme catalyses [protein-PII]-uridylyl-L-tyrosine + H2O = [protein-PII]-L-tyrosine + UMP + H(+). Uridylyltransferase (UTase) activity is inhibited by glutamine, while glutamine activates uridylyl-removing (UR) activity. Its function is as follows. Modifies, by uridylylation and deuridylylation, the PII regulatory proteins (GlnB and homologs), in response to the nitrogen status of the cell that GlnD senses through the glutamine level. Under low glutamine levels, catalyzes the conversion of the PII proteins and UTP to PII-UMP and PPi, while under higher glutamine levels, GlnD hydrolyzes PII-UMP to PII and UMP (deuridylylation). Thus, controls uridylylation state and activity of the PII proteins, and plays an important role in the regulation of nitrogen assimilation and metabolism. The protein is Bifunctional uridylyltransferase/uridylyl-removing enzyme of Chromobacterium violaceum (strain ATCC 12472 / DSM 30191 / JCM 1249 / CCUG 213 / NBRC 12614 / NCIMB 9131 / NCTC 9757 / MK).